The following is a 122-amino-acid chain: Large ribosomal subunit protein uL14c (122 aa).

The protein belongs to the universal ribosomal protein uL14 family. As to quaternary structure, part of the 50S ribosomal subunit.

The protein localises to the plastid. It localises to the chloroplast. Functionally, binds to 23S rRNA. The chain is Large ribosomal subunit protein uL14c from Zygnema circumcarinatum (Green alga).